A 187-amino-acid chain; its full sequence is Protein GrpE (187 aa).

The segment at 1–26 is disordered; that stretch reads MHDPKESLETNIQETESQEKLPETPI.

The protein belongs to the GrpE family. As to quaternary structure, homodimer.

It localises to the cytoplasm. Participates actively in the response to hyperosmotic and heat shock by preventing the aggregation of stress-denatured proteins, in association with DnaK and GrpE. It is the nucleotide exchange factor for DnaK and may function as a thermosensor. Unfolded proteins bind initially to DnaJ; upon interaction with the DnaJ-bound protein, DnaK hydrolyzes its bound ATP, resulting in the formation of a stable complex. GrpE releases ADP from DnaK; ATP binding to DnaK triggers the release of the substrate protein, thus completing the reaction cycle. Several rounds of ATP-dependent interactions between DnaJ, DnaK and GrpE are required for fully efficient folding. This Dichelobacter nodosus (strain VCS1703A) protein is Protein GrpE.